The following is a 448-amino-acid chain: Proteases secretion protein PrtE (448 aa).

At 1 to 30 (MTGMDITTQDELNEAAMRDRASRDEERALR) the chain is on the cytoplasmic side. A helical membrane pass occupies residues 31–50 (LGWWLVLAGFGGFLLWALLA). Topologically, residues 51–448 (PLDKGVAVQG…DRMHLALTEE (398 aa)) are periplasmic.

The protein belongs to the membrane fusion protein (MFP) (TC 8.A.1) family.

Its subcellular location is the cell inner membrane. Functionally, involved in the secretion of proteases A, B, C and G. In Dickeya chrysanthemi (Pectobacterium chrysanthemi), this protein is Proteases secretion protein PrtE (prtE).